Consider the following 341-residue polypeptide: Ferrochelatase (341 aa).

The Fe cation site is built by His196 and Glu277.

It belongs to the ferrochelatase family.

The protein resides in the cytoplasm. The enzyme catalyses heme b + 2 H(+) = protoporphyrin IX + Fe(2+). The protein operates within porphyrin-containing compound metabolism; protoheme biosynthesis; protoheme from protoporphyrin-IX: step 1/1. Its function is as follows. Catalyzes the ferrous insertion into protoporphyrin IX. The polypeptide is Ferrochelatase (Synechococcus sp. (strain JA-3-3Ab) (Cyanobacteria bacterium Yellowstone A-Prime)).